Reading from the N-terminus, the 598-residue chain is Glutamine--fructose-6-phosphate aminotransferase [isomerizing] (598 aa).

Cys2 (nucleophile; for GATase activity) is an active-site residue. Residues 2 to 218 (CGIVGYIGNN…DLSLGYASKD (217 aa)) form the Glutamine amidotransferase type-2 domain. SIS domains lie at 277–421 (VFDE…KRNL) and 450–588 (LSKR…VDMP). Residue Lys593 is the For Fru-6P isomerization activity of the active site.

As to quaternary structure, homodimer.

The protein localises to the cytoplasm. The enzyme catalyses D-fructose 6-phosphate + L-glutamine = D-glucosamine 6-phosphate + L-glutamate. Catalyzes the first step in hexosamine metabolism, converting fructose-6P into glucosamine-6P using glutamine as a nitrogen source. This is Glutamine--fructose-6-phosphate aminotransferase [isomerizing] from Campylobacter jejuni subsp. jejuni serotype O:2 (strain ATCC 700819 / NCTC 11168).